Consider the following 123-residue polypeptide: Insulin-like peptide-1 (123 aa).

The first 24 residues, 1–24, serve as a signal peptide directing secretion; the sequence is MTTSSYFLLVALGLLLYVCQSSFG. Disulfide bonds link C29–C106, C41–C109, C53–C122, and C108–C113. Position 34 is a 4-hydroxyproline; partial (P34). A propeptide spans 59–102 (c peptide); the sequence is EQGGANNARAYTGRTSSLMKRRGFLSLLKKRGKRDEGSLQRSGR. At E107 the chain carries 4-carboxyglutamate. A 4-carboxyglutamate; partial modification is found at E117.

It belongs to the insulin family. As to quaternary structure, heterodimer of A and B chains; disulfide-linked. As to expression, expressed by the venom duct.

It is found in the secreted. Its function is as follows. This venom insulin facilitates prey capture by rapidly inducing hypoglycemic shock. Intraperitoneal injection of this peptide into zebrafish lowers blood glucose with the same potency than human insulin. In vivo, when applied to water, this peptide reduces overall locomotor activity of zebrafish larvae, observed as a significant decrease in the percentage of time spent swimming and movement frequency. This Conus victoriae (Queen Victoria cone) protein is Insulin-like peptide-1.